Consider the following 215-residue polypeptide: ATP phosphoribosyltransferase (215 aa).

It belongs to the ATP phosphoribosyltransferase family. Short subfamily. As to quaternary structure, heteromultimer composed of HisG and HisZ subunits.

It is found in the cytoplasm. It carries out the reaction 1-(5-phospho-beta-D-ribosyl)-ATP + diphosphate = 5-phospho-alpha-D-ribose 1-diphosphate + ATP. It participates in amino-acid biosynthesis; L-histidine biosynthesis; L-histidine from 5-phospho-alpha-D-ribose 1-diphosphate: step 1/9. Its function is as follows. Catalyzes the condensation of ATP and 5-phosphoribose 1-diphosphate to form N'-(5'-phosphoribosyl)-ATP (PR-ATP). Has a crucial role in the pathway because the rate of histidine biosynthesis seems to be controlled primarily by regulation of HisG enzymatic activity. The polypeptide is ATP phosphoribosyltransferase (Prochlorococcus marinus subsp. pastoris (strain CCMP1986 / NIES-2087 / MED4)).